We begin with the raw amino-acid sequence, 643 residues long: Methyl-accepting chemotaxis protein McpA (643 aa).

A helical membrane pass occupies residues 24–44 (ILLSACGVVVLAFALFTLYND). Positions 49–273 (NTIRQNIEAS…GLPSAQWYIG (225 aa)) constitute a Cache domain. The helical transmembrane segment at 293–313 (IIAMLIAVAAIAGLLGLLIPV) threads the bilayer. The HAMP domain maps to 312–366 (PVLMSPLTTMGRAMRDIAEGEGDLTRRLAVQNKDEFGELATSFNRFVERIHASIS). The Methyl-accepting transducer domain occupies 371-607 (ATRLVHDLSE…SLNLDITQIN (237 aa)).

This sequence belongs to the methyl-accepting chemotaxis (MCP) protein family.

It localises to the cell membrane. Functionally, chemotactic-signal transducers respond to changes in the concentration of attractants and repellents in the environment, transduce a signal from the outside to the inside of the cell, and facilitate sensory adaptation through the variation of the level of methylation. McpA is a chemoreceptor that binds to 12 different L-amino acids and mediates chemotaxis toward these amino acids. This is Methyl-accepting chemotaxis protein McpA from Pseudomonas putida (strain ATCC 47054 / DSM 6125 / CFBP 8728 / NCIMB 11950 / KT2440).